Here is a 653-residue protein sequence, read N- to C-terminus: Glyceraldehyde-3-phosphate:ferredoxin oxidoreductase (653 aa).

Tungstopterin-binding residues include R70, G89, R196, A197, G199, and R206. [4Fe-4S] cluster-binding residues include C333 and C337. D378, D383, and D544 together coordinate tungstopterin. Position 549 (C549) interacts with [4Fe-4S] cluster.

Belongs to the AOR/FOR family. As to quaternary structure, monomer. The cofactor is [4Fe-4S] cluster. Tungstopterin serves as cofactor.

The catalysed reaction is D-glyceraldehyde 3-phosphate + 2 oxidized [2Fe-2S]-[ferredoxin] + H2O = (2R)-3-phosphoglycerate + 2 reduced [2Fe-2S]-[ferredoxin] + 3 H(+). Its activity is regulated as follows. Sensitive to oxygen. Activity increased by 58%-93% in the presence of acetyl phosphate, 3-phosphoglycerate or 2,3-bisphosphoglycerate at 10 mM concentration. Inhibited by up to 25% in the presence of crotonaldehyde or formaldehyde at 10 mM concentration. Inhibited by up to 50% by sodium dithionate. 3.5-fold increase in activity observed by addition of potassium phosphate or sodium arsenate at 200 mM concentration. Activity enhanced by potassium chloride, sodium citrate or sodium sulfate at 200 mM concentration. Functionally, catalyzes the oxidation of glyceraldehyde-3-phosphate to 3-phosphoglycerate. Uses ferredoxin as electron acceptor. In vitro can also use benzyl viologen, but not NADP or NAD, as electron acceptor. Probably acts as a glycolytic enzyme in place of glyceraldehyde-3-phosphate dehydrogenase (GAPDH) and phosphoglycerate kinase (PGK) in an unusual Emden-Meyerhof glycolysis. The sequence is that of Glyceraldehyde-3-phosphate:ferredoxin oxidoreductase from Pyrococcus furiosus (strain ATCC 43587 / DSM 3638 / JCM 8422 / Vc1).